A 235-amino-acid polypeptide reads, in one-letter code: MTELARLKFYATQPHSCSYLPDEQATTLFLDPSQPMDVHVYADLSEMGFRRSGDHLYRPHCQNCNACVPARIPVAQFLPDRNQKRILKRNADLTVMPAKPRFTEEYFDLYQRYIEERHADGDMFPPSRDQFSTFLVRDLPFSRFYEFRADGRLVAVAVTDLLPNGLSAVYTFYEPAEERRSLGRFAILWQIGEALRQELEAVYLGYWIKNCKKMNYKTQYRPIELLINQRWVTLN.

The protein belongs to the R-transferase family. Bpt subfamily.

It is found in the cytoplasm. The enzyme catalyses N-terminal L-glutamyl-[protein] + L-leucyl-tRNA(Leu) = N-terminal L-leucyl-L-glutamyl-[protein] + tRNA(Leu) + H(+). It catalyses the reaction N-terminal L-aspartyl-[protein] + L-leucyl-tRNA(Leu) = N-terminal L-leucyl-L-aspartyl-[protein] + tRNA(Leu) + H(+). Its function is as follows. Functions in the N-end rule pathway of protein degradation where it conjugates Leu from its aminoacyl-tRNA to the N-termini of proteins containing an N-terminal aspartate or glutamate. The chain is Aspartate/glutamate leucyltransferase from Pseudomonas fluorescens (strain SBW25).